Reading from the N-terminus, the 495-residue chain is UDP-N-acetylmuramoyl-L-alanyl-D-glutamate--2,6-diaminopimelate ligase (495 aa).

UDP-N-acetyl-alpha-D-muramoyl-L-alanyl-D-glutamate-binding positions include Leu-27, Ser-29, and 44–46 (HQT). 116-122 (GTNGKTT) contacts ATP. UDP-N-acetyl-alpha-D-muramoyl-L-alanyl-D-glutamate-binding positions include Asn-157, 158–159 (TT), Ser-185, Gln-191, and Arg-193. Lys-225 is modified (N6-carboxylysine). Residues Arg-390, 414–417 (DNPR), Gly-465, and Glu-469 contribute to the meso-2,6-diaminopimelate site. A Meso-diaminopimelate recognition motif motif is present at residues 414-417 (DNPR).

This sequence belongs to the MurCDEF family. MurE subfamily. The cofactor is Mg(2+). Post-translationally, carboxylation is probably crucial for Mg(2+) binding and, consequently, for the gamma-phosphate positioning of ATP.

The protein resides in the cytoplasm. It carries out the reaction UDP-N-acetyl-alpha-D-muramoyl-L-alanyl-D-glutamate + meso-2,6-diaminopimelate + ATP = UDP-N-acetyl-alpha-D-muramoyl-L-alanyl-gamma-D-glutamyl-meso-2,6-diaminopimelate + ADP + phosphate + H(+). Its pathway is cell wall biogenesis; peptidoglycan biosynthesis. Functionally, catalyzes the addition of meso-diaminopimelic acid to the nucleotide precursor UDP-N-acetylmuramoyl-L-alanyl-D-glutamate (UMAG) in the biosynthesis of bacterial cell-wall peptidoglycan. In Photorhabdus laumondii subsp. laumondii (strain DSM 15139 / CIP 105565 / TT01) (Photorhabdus luminescens subsp. laumondii), this protein is UDP-N-acetylmuramoyl-L-alanyl-D-glutamate--2,6-diaminopimelate ligase.